We begin with the raw amino-acid sequence, 378 residues long: Chaperone protein DnaJ (378 aa).

The J domain occupies 5–70 (DYYEVLGVAK…QKRAAYDQYG (66 aa)). A CR-type zinc finger spans residues 138 to 216 (GYDTQIRVPS…CHGSGKVKET (79 aa)). Cys-151, Cys-154, Cys-168, Cys-171, Cys-190, Cys-193, Cys-204, and Cys-207 together coordinate Zn(2+). CXXCXGXG motif repeat units lie at residues 151–158 (CEVCHGSG), 168–175 (CPTCHGQG), 190–197 (CPKCHGTG), and 204–211 (CAHCHGSG).

Belongs to the DnaJ family. Homodimer. It depends on Zn(2+) as a cofactor.

It localises to the cytoplasm. Its function is as follows. Participates actively in the response to hyperosmotic and heat shock by preventing the aggregation of stress-denatured proteins and by disaggregating proteins, also in an autonomous, DnaK-independent fashion. Unfolded proteins bind initially to DnaJ; upon interaction with the DnaJ-bound protein, DnaK hydrolyzes its bound ATP, resulting in the formation of a stable complex. GrpE releases ADP from DnaK; ATP binding to DnaK triggers the release of the substrate protein, thus completing the reaction cycle. Several rounds of ATP-dependent interactions between DnaJ, DnaK and GrpE are required for fully efficient folding. Also involved, together with DnaK and GrpE, in the DNA replication of plasmids through activation of initiation proteins. The chain is Chaperone protein DnaJ from Burkholderia cenocepacia (strain HI2424).